A 337-amino-acid polypeptide reads, in one-letter code: Glyceraldehyde-3-phosphate dehydrogenase (337 aa).

NAD(+)-binding positions include 12 to 13, D34, and K79; that span reads RI. Residues 150–152, T181, 210–211, and R233 contribute to the D-glyceraldehyde 3-phosphate site; these read SCT and TG. C151 acts as the Nucleophile in catalysis. Residue N315 coordinates NAD(+).

Belongs to the glyceraldehyde-3-phosphate dehydrogenase family. As to quaternary structure, homotetramer.

The protein localises to the cytoplasm. It carries out the reaction D-glyceraldehyde 3-phosphate + phosphate + NAD(+) = (2R)-3-phospho-glyceroyl phosphate + NADH + H(+). The protein operates within carbohydrate degradation; glycolysis; pyruvate from D-glyceraldehyde 3-phosphate: step 1/5. The protein is Glyceraldehyde-3-phosphate dehydrogenase (GPD) of Cochliobolus lunatus (Filamentous fungus).